The following is a 201-amino-acid chain: TATA-box-binding protein 2 (201 aa).

2 consecutive repeat copies span residues 26–102 and 116–193.

It belongs to the TBP family. In terms of assembly, belongs to the TFIID complex together with the TBP-associated factors (TAFs). Binds DNA as monomer.

Its subcellular location is the nucleus. Functionally, general transcription factor that functions at the core of the DNA-binding multiprotein factor TFIID. Binding of TFIID to the TATA box is the initial transcriptional step of the pre-initiation complex (PIC), playing a role in the activation of eukaryotic genes transcribed by RNA polymerase II. The polypeptide is TATA-box-binding protein 2 (TBP2) (Triticum aestivum (Wheat)).